We begin with the raw amino-acid sequence, 182 residues long: Large ribosomal subunit protein uL6 (182 aa).

Belongs to the universal ribosomal protein uL6 family. As to quaternary structure, part of the 50S ribosomal subunit.

In terms of biological role, this protein binds to the 23S rRNA, and is important in its secondary structure. It is located near the subunit interface in the base of the L7/L12 stalk, and near the tRNA binding site of the peptidyltransferase center. The protein is Large ribosomal subunit protein uL6 of Dehalococcoides mccartyi (strain CBDB1).